Reading from the N-terminus, the 501-residue chain is Prostacyclin synthase (501 aa).

Residues 1–21 form a helical membrane-spanning segment; the sequence is MSWAALLGLLAVLLLLLLLLS. Residues arginine 107, leucine 113, asparagine 288, 359 to 360, and arginine 383 each bind substrate; that span reads TR. Cysteine 442 is a binding site for heme.

Belongs to the cytochrome P450 family. The cofactor is heme.

It localises to the endoplasmic reticulum membrane. The catalysed reaction is prostaglandin H2 = prostaglandin I2. It carries out the reaction a hydroperoxyeicosatetraenoate = an oxoeicosatetraenoate + H2O. It catalyses the reaction (15S)-hydroperoxy-(5Z,8Z,11Z,13E)-eicosatetraenoate = 15-oxo-(5Z,8Z,11Z,13E)-eicosatetraenoate + H2O. The enzyme catalyses (15S)-hydroperoxy-(5Z,8Z,11Z,13E)-eicosatetraenoate + AH2 = (15S)-hydroxy-(5Z,8Z,11Z,13E)-eicosatetraenoate + A + H2O. In terms of biological role, catalyzes the biosynthesis and metabolism of eicosanoids. Catalyzes the isomerization of prostaglandin H2 to prostacyclin (= prostaglandin I2), a potent mediator of vasodilation and inhibitor of platelet aggregation. Additionally, displays dehydratase activity, toward hydroperoxyeicosatetraenoates (HPETEs), especially toward (15S)-hydroperoxy-(5Z,8Z,11Z,13E)-eicosatetraenoate (15(S)-HPETE). This Rattus norvegicus (Rat) protein is Prostacyclin synthase (Ptgis).